The chain runs to 259 residues: UPF0246 protein VSAL_I2547 (259 aa).

Belongs to the UPF0246 family.

The sequence is that of UPF0246 protein VSAL_I2547 from Aliivibrio salmonicida (strain LFI1238) (Vibrio salmonicida (strain LFI1238)).